We begin with the raw amino-acid sequence, 593 residues long: Uncoordinated protein 58 (593 aa).

6 consecutive transmembrane segments (helical) span residues Val-186–Leu-206, Thr-291–Val-311, Val-320–Ile-340, Pro-402–Ile-422, Phe-430–Val-450, and Ile-455–Val-475.

This sequence belongs to the two pore domain potassium channel (TC 1.A.1.8) family.

It localises to the membrane. Has a role in mobility, possibly in the transport of potassium in muscles. The protein is Uncoordinated protein 58 of Caenorhabditis briggsae.